Reading from the N-terminus, the 229-residue chain is Aldehyde oxidoreductase iron-sulfur-binding subunit PaoA (229 aa).

A disordered region spans residues 1-21 (MSNQGEYPEDNRVGKHEPHDL). The tat-type signal signal peptide spans 1–53 (MSNQGEYPEDNRVGKHEPHDLSLTRRDLIKVSAATAATAVVYPHSTLAASVPA). Residues 9–21 (EDNRVGKHEPHDL) show a composition bias toward basic and acidic residues. The 2Fe-2S ferredoxin-type domain maps to 61–137 (MPLTLKVNGK…GAEITTIEGL (77 aa)). Residues Cys-99, Cys-104, Gly-105, Cys-107, Cys-119, Cys-158, Cys-161, Cys-208, and Cys-210 each contribute to the [2Fe-2S] cluster site.

Heterotrimer composed of PaoA, PaoB and PaoC. Requires [2Fe-2S] cluster as cofactor. Exported by the Tat system. The position of the signal peptide cleavage has not been experimentally proven.

The protein resides in the periplasm. It carries out the reaction an aldehyde + A + H2O = a carboxylate + AH2 + H(+). With respect to regulation, the complex requires PaoD for activity. In terms of biological role, oxidizes aldehydes to the corresponding carboxylic acids with a preference for aromatic aldehydes. It might play a role in the detoxification of aldehydes to avoid cell damage. The sequence is that of Aldehyde oxidoreductase iron-sulfur-binding subunit PaoA from Escherichia coli (strain K12).